A 145-amino-acid polypeptide reads, in one-letter code: D-aminoacyl-tRNA deacylase (145 aa).

Residues 137 to 138 (GP) carry the Gly-cisPro motif, important for rejection of L-amino acids motif.

This sequence belongs to the DTD family. In terms of assembly, homodimer.

The protein localises to the cytoplasm. The catalysed reaction is glycyl-tRNA(Ala) + H2O = tRNA(Ala) + glycine + H(+). The enzyme catalyses a D-aminoacyl-tRNA + H2O = a tRNA + a D-alpha-amino acid + H(+). In terms of biological role, an aminoacyl-tRNA editing enzyme that deacylates mischarged D-aminoacyl-tRNAs. Also deacylates mischarged glycyl-tRNA(Ala), protecting cells against glycine mischarging by AlaRS. Acts via tRNA-based rather than protein-based catalysis; rejects L-amino acids rather than detecting D-amino acids in the active site. By recycling D-aminoacyl-tRNA to D-amino acids and free tRNA molecules, this enzyme counteracts the toxicity associated with the formation of D-aminoacyl-tRNA entities in vivo and helps enforce protein L-homochirality. This Streptomyces avermitilis (strain ATCC 31267 / DSM 46492 / JCM 5070 / NBRC 14893 / NCIMB 12804 / NRRL 8165 / MA-4680) protein is D-aminoacyl-tRNA deacylase.